The sequence spans 252 residues: Glycine-rich cell wall structural protein 1.0 (252 aa).

Residues 1-30 (MATSKVLLSNVLFVFVCFGICSAARTLLTL) form the signal peptide. A disordered region spans residues 231-252 (GSGYGGGGGSGEGGGHGGGYYP).

As to expression, expressed in young hypocotyls.

The protein resides in the secreted. Its subcellular location is the cell wall. Functionally, responsible for plasticity of the cell wall. The protein is Glycine-rich cell wall structural protein 1.0 of Phaseolus vulgaris (Kidney bean).